Here is a 348-residue protein sequence, read N- to C-terminus: Elongation factor Ts (348 aa).

The tract at residues 82–85 (TDFV) is involved in Mg(2+) ion dislocation from EF-Tu.

It belongs to the EF-Ts family.

The protein localises to the cytoplasm. Functionally, associates with the EF-Tu.GDP complex and induces the exchange of GDP to GTP. It remains bound to the aminoacyl-tRNA.EF-Tu.GTP complex up to the GTP hydrolysis stage on the ribosome. This chain is Elongation factor Ts, found in Aliarcobacter butzleri (strain RM4018) (Arcobacter butzleri).